Here is a 531-residue protein sequence, read N- to C-terminus: Polypyrimidine tract-binding protein 2 (531 aa).

The residue at position 1 (Met1) is an N-acetylmethionine. A phosphoserine mark is found at Ser26 and Ser27. 2 consecutive RRM domains span residues 59–133 (RVLH…YSNH) and 181–257 (LRII…FSKL). Ser308 bears the Phosphoserine mark. RRM domains lie at 338–412 (TVLL…LSKH) and 455–529 (ATLH…FSKS).

In terms of assembly, monomer. Interacts with NOVA1; the interaction is direct. Identified in a mRNP complex, at least composed of DHX9, DDX3X, ELAVL1, HNRNPU, IGF2BP1, ILF3, PABPC1, PCBP2, PTBP2, STAU1, STAU2, SYNCRIP and YBX1. Part of a ternary complex containing KHSRP and HNRPH1. Interacts with NOVA2; the interaction is direct. As to expression, mainly expressed in brain although also detected in other tissues like heart and skeletal muscle. Isoform 1 and isoform 2 are specifically expressed in neuronal tissues. Isoform 3 and isoform 4 are expressed in non-neuronal tissues. Isoform 5 and isoform 6 are truncated forms expressed in non-neuronal tissues.

The protein resides in the nucleus. In terms of biological role, RNA-binding protein which binds to intronic polypyrimidine tracts and mediates negative regulation of exons splicing. May antagonize in a tissue-specific manner the ability of NOVA1 to activate exon selection. In addition to its function in pre-mRNA splicing, plays also a role in the regulation of translation. Functionally, reduced affinity for RNA. The chain is Polypyrimidine tract-binding protein 2 from Homo sapiens (Human).